A 377-amino-acid polypeptide reads, in one-letter code: 4-hydroxy-3-methylbut-2-en-1-yl diphosphate synthase (flavodoxin) (377 aa).

[4Fe-4S] cluster contacts are provided by cysteine 275, cysteine 278, cysteine 310, and glutamate 317.

The protein belongs to the IspG family. Requires [4Fe-4S] cluster as cofactor.

The catalysed reaction is (2E)-4-hydroxy-3-methylbut-2-enyl diphosphate + oxidized [flavodoxin] + H2O + 2 H(+) = 2-C-methyl-D-erythritol 2,4-cyclic diphosphate + reduced [flavodoxin]. Its pathway is isoprenoid biosynthesis; isopentenyl diphosphate biosynthesis via DXP pathway; isopentenyl diphosphate from 1-deoxy-D-xylulose 5-phosphate: step 5/6. In terms of biological role, converts 2C-methyl-D-erythritol 2,4-cyclodiphosphate (ME-2,4cPP) into 1-hydroxy-2-methyl-2-(E)-butenyl 4-diphosphate. The polypeptide is 4-hydroxy-3-methylbut-2-en-1-yl diphosphate synthase (flavodoxin) (Ruegeria sp. (strain TM1040) (Silicibacter sp.)).